The following is a 154-amino-acid chain: Movement protein (154 aa).

2 disordered regions span residues serine 83–proline 103 and tryptophan 123–arginine 154.

This sequence belongs to the luteoviruses movement protein family.

Transports viral genome to neighboring plant cells directly through plasmosdesmata, without any budding. The movement protein allows efficient cell to cell propagation, by bypassing the host cell wall barrier. This is Movement protein from Barley yellow dwarf virus (isolate MAV) (BYDV).